The primary structure comprises 216 residues: DegV domain-containing protein UU190 (216 aa).

The 215-residue stretch at 1–215 (MLWKNLDELF…LNNFAILIEA (215 aa)) folds into the DegV domain. Ser-26 is a hexadecanoate binding site.

May bind long-chain fatty acids, such as palmitate, and may play a role in lipid transport or fatty acid metabolism. The polypeptide is DegV domain-containing protein UU190 (Ureaplasma parvum serovar 3 (strain ATCC 700970)).